The primary structure comprises 150 residues: UPF0756 membrane protein HI_1074 (150 aa).

4 helical membrane-spanning segments follow: residues 1–21 (MTLQ…LGVL), 52–72 (YGVK…LVSG), 81–101 (GFLS…AWLA), and 123–143 (IIGV…AGIL).

The protein belongs to the UPF0756 family.

The protein resides in the cell membrane. The sequence is that of UPF0756 membrane protein HI_1074 from Haemophilus influenzae (strain ATCC 51907 / DSM 11121 / KW20 / Rd).